We begin with the raw amino-acid sequence, 229 residues long: Cytochrome c oxidase assembly factor 7 (229 aa).

Sel1-like repeat units lie at residues 34–66 (PEGCHRLADYLEGVKKNYESTAQVLQHNCEVNA), 68–104 (AQSCYKLGAYHVTGKGGMKKCLKTAYSCFLKSCNTQG), 108–145 (VDACHNVGLLAQDGRALETGPDTTVARQYFEKACEGGF), 146–182 (APSCFNLSTLYIQGFPGLDKSMPLALKYALKACDLGH), and 183–218 (VWGCANASRMYKLGDGTDKDEQRAEELKNRAKDLHG). A disordered region spans residues 197–229 (DGTDKDEQRAEELKNRAKDLHGQEKERQLKFGE).

Belongs to the hcp beta-lactamase family.

The protein resides in the mitochondrion intermembrane space. Its function is as follows. May be required for assembly of mitochondrial respiratory chain complexes. In Danio rerio (Zebrafish), this protein is Cytochrome c oxidase assembly factor 7 (coa7).